The chain runs to 534 residues: BEN domain-containing protein 4 (534 aa).

3 disordered regions span residues 1–24 (MEEEMQPAEEGPSVPKIYKQRSPY), 48–128 (ELPH…AASS), and 287–322 (VHTLGGWTSPATSESHGHPSSSTLPEEEEEEDEEGY). Pro residues predominate over residues 53–63 (RAPPPPPPPFA). The span at 69–83 (SISSSEPPPQQFQAQ) shows a compositional bias: polar residues. Residues 91-109 (GRAAAAASSSSPSCTPATS) show a composition bias toward low complexity. Residues 295–310 (SPATSESHGHPSSSTL) show a composition bias toward polar residues. Residues 311 to 321 (PEEEEEEDEEG) are compositionally biased toward acidic residues. A coiled-coil region spans residues 324 to 351 (PRCQELEQEVISLQQENEELRRKLESIP). The BEN domain maps to 390-498 (NYPVYITSKQ…DAVGHARQGR (109 aa)).

This chain is BEN domain-containing protein 4 (BEND4), found in Homo sapiens (Human).